The primary structure comprises 302 residues: HTH-type transcriptional regulator ArgP (302 aa).

Residues 4-60 (PDYRTLQALDAVIRERGFERAAQKLCITQSAVSQRIKQLENLFGQPLLVRTVPPRPT) form the HTH lysR-type domain. The H-T-H motif DNA-binding region spans 21 to 40 (FERAAQKLCITQSAVSQRIK).

It belongs to the LysR transcriptional regulatory family. As to quaternary structure, homodimer.

Functionally, controls the transcription of genes involved in arginine and lysine metabolism. The polypeptide is HTH-type transcriptional regulator ArgP (Yersinia pseudotuberculosis serotype O:1b (strain IP 31758)).